The sequence spans 88 residues: Exodeoxyribonuclease 7 small subunit (88 aa).

This sequence belongs to the XseB family. As to quaternary structure, heterooligomer composed of large and small subunits.

It is found in the cytoplasm. It catalyses the reaction Exonucleolytic cleavage in either 5'- to 3'- or 3'- to 5'-direction to yield nucleoside 5'-phosphates.. Its function is as follows. Bidirectionally degrades single-stranded DNA into large acid-insoluble oligonucleotides, which are then degraded further into small acid-soluble oligonucleotides. This Bordetella bronchiseptica (strain ATCC BAA-588 / NCTC 13252 / RB50) (Alcaligenes bronchisepticus) protein is Exodeoxyribonuclease 7 small subunit.